A 331-amino-acid polypeptide reads, in one-letter code: Thiamine thiazole synthase (331 aa).

Substrate is bound by residues serine 82, 103–104 (EA), glycine 111, and valine 176. The residue at position 210 (cysteine 210) is a 2,3-didehydroalanine (Cys). Substrate is bound by residues aspartate 212, histidine 242, methionine 296, and 306 to 308 (RMG).

It belongs to the THI4 family. In terms of assembly, homooctamer. The cofactor is Fe cation. Post-translationally, during the catalytic reaction, a sulfide is transferred from Cys-210 to a reaction intermediate, generating a dehydroalanine residue.

Its subcellular location is the cytoplasm. It is found in the nucleus. It carries out the reaction [ADP-thiazole synthase]-L-cysteine + glycine + NAD(+) = [ADP-thiazole synthase]-dehydroalanine + ADP-5-ethyl-4-methylthiazole-2-carboxylate + nicotinamide + 3 H2O + 2 H(+). In terms of biological role, involved in biosynthesis of the thiamine precursor thiazole. Catalyzes the conversion of NAD and glycine to adenosine diphosphate 5-(2-hydroxyethyl)-4-methylthiazole-2-carboxylic acid (ADT), an adenylated thiazole intermediate. The reaction includes an iron-dependent sulfide transfer from a conserved cysteine residue of the protein to a thiazole intermediate. The enzyme can only undergo a single turnover, which suggests it is a suicide enzyme. May have additional roles in adaptation to various stress conditions and in DNA damage tolerance. The polypeptide is Thiamine thiazole synthase (Eremothecium gossypii (strain ATCC 10895 / CBS 109.51 / FGSC 9923 / NRRL Y-1056) (Yeast)).